Here is a 439-residue protein sequence, read N- to C-terminus: Xylose isomerase (439 aa).

Catalysis depends on residues histidine 103 and aspartate 106. The Mg(2+) site is built by glutamate 234, glutamate 270, histidine 273, aspartate 298, aspartate 309, aspartate 311, and aspartate 341.

The protein belongs to the xylose isomerase family. Homotetramer. Mg(2+) serves as cofactor.

It is found in the cytoplasm. The catalysed reaction is alpha-D-xylose = alpha-D-xylulofuranose. The chain is Xylose isomerase from Bacteroides fragilis (strain YCH46).